Here is a 476-residue protein sequence, read N- to C-terminus: Growth arrest-specific protein 7 (476 aa).

Positions 1–62 (MSGARCRTLY…PASYVQLLEK (62 aa)) constitute an SH3 domain. A WW domain is found at 77 to 110 (VILPPGWQSYLSPQGRRYYVNTTTNETTWERPSS). The tract at residues 100 to 171 (TNETTWERPS…SSPSKKQSKE (72 aa)) is disordered. Low complexity predominate over residues 108-120 (PSSSPGIPASPGS). Serine 117 and serine 163 each carry phosphoserine. A compositionally biased stretch (polar residues) spans 150-171 (RKSTGDSQNLGSSSPSKKQSKE). The region spanning 196 to 456 (TEWSYCDYFW…LLRKVDPAKD (261 aa)) is the F-BAR domain. Residues 309–419 (ENFKKDMKKC…RLEVERVEMI (111 aa)) are a coiled coil.

It localises to the cytoplasm. In terms of biological role, may play a role in promoting maturation and morphological differentiation of cerebellar neurons. This chain is Growth arrest-specific protein 7 (GAS7), found in Homo sapiens (Human).